A 212-amino-acid chain; its full sequence is MSRRRRIGVMGGTFDPIHHGHLVAASEVQAQFGLEQVIFVPTGQPWQKTHEVVSPAEDRYLMTVVATASNPRFQVSRVDIDRAGPTYTADTLADLRALYPEAELYFITGADALEQILSWHRVDELFELAHFIGVTRPGYQLAGEHLPKGAVSLVEIPAMAISSTGCRQRVRAGLPVWYLVPDGIVQYIAKRGLYRGEDDSAGVEWGPRPSGT.

This sequence belongs to the NadD family.

The enzyme catalyses nicotinate beta-D-ribonucleotide + ATP + H(+) = deamido-NAD(+) + diphosphate. Its pathway is cofactor biosynthesis; NAD(+) biosynthesis; deamido-NAD(+) from nicotinate D-ribonucleotide: step 1/1. Catalyzes the reversible adenylation of nicotinate mononucleotide (NaMN) to nicotinic acid adenine dinucleotide (NaAD). The polypeptide is Probable nicotinate-nucleotide adenylyltransferase (Saccharopolyspora erythraea (strain ATCC 11635 / DSM 40517 / JCM 4748 / NBRC 13426 / NCIMB 8594 / NRRL 2338)).